A 269-amino-acid chain; its full sequence is Transcription factor MYB7 (269 aa).

2 HTH myb-type domains span residues 9–61 and 62–116; these read KEHM…INYL and RPDL…KRKL. 2 consecutive DNA-binding regions (H-T-H motif) follow at residues 37–61 and 89–112; these read WRSL…INYL and WSLI…NTHI.

Interacts with SAD2. In terms of tissue distribution, expressed in anthers. Expressed in pollen grains and mature seeds. Expressed in roots and vasculature of leaves.

The protein resides in the nucleus. Transcription factor involved in the negative regulation of flavonol biosynthesis. Represses the early phenylpropanoid genes, phenylalanine ammonia-lyase (PAL), cinnamate 4-hydroxylase (C4H) and 4-coumarate-CoA ligase (4CL), as well as the flavonoid-specific genes, flavonoid 3'-hydroxylase (F3'H) and dihydroflavonol 4-reductase (DFR). Plays a role in seed germination inhibition. Negatively regulates the expression of the abscisic acid (ABA) signaling transcription factor ABI5 in seeds. This chain is Transcription factor MYB7, found in Arabidopsis thaliana (Mouse-ear cress).